The chain runs to 204 residues: Uridylate kinase (204 aa).

26-31 (GAGKGT) contributes to the ATP binding site. The interval 46–76 (SAGDLLRAEQGRAGSQYGELIKNCIKEGQIV) is NMP. Residues R52, 74–76 (QIV), 104–107 (GFPR), and Q111 contribute to the a ribonucleoside 5'-phosphate site. The LID stretch occupies residues 141–151 (ERGKTSGRSDD). R142 is an ATP binding site. R148 and R159 together coordinate a ribonucleoside 5'-phosphate. R187 is an ATP binding site.

It belongs to the adenylate kinase family. UMP-CMP kinase subfamily. As to quaternary structure, monomer. It depends on Mg(2+) as a cofactor.

Its subcellular location is the cytoplasm. It is found in the nucleus. It carries out the reaction UMP + ATP = UDP + ADP. Functionally, catalyzes the phosphorylation of pyrimidine nucleoside monophosphates at the expense of ATP. Plays an important role in de novo pyrimidine nucleotide biosynthesis. Has preference for UMP and dUMP as phosphate acceptors, but can also use CMP, dCMP, AMP, GMP, dGMP and dTMP. ATP and dATP are the best phosphate donors, but can also use GTP, dGTP, dCTP, and dTTP to some degree. This chain is Uridylate kinase, found in Saccharomyces cerevisiae (strain ATCC 204508 / S288c) (Baker's yeast).